Consider the following 393-residue polypeptide: Bifunctional enzyme Fae/Hps (393 aa).

The tract at residues 1-161 (MYLIGEALIG…HEKDRAAHAV (161 aa)) is formaldehyde-activating enzyme. The active-site Proton donor is the His-17. The substrate site is built by Asp-19, Leu-48, Lys-66, Thr-68, and Gln-83. A 3-hexulose-6-phosphate synthase region spans residues 162–393 (MGFKVPRLWD…IDQFRIMTDF (232 aa)).

The protein in the N-terminal section; belongs to the formaldehyde-activating enzyme family. This sequence in the C-terminal section; belongs to the HPS/KGPDC family. HPS subfamily.

The catalysed reaction is 5,6,7,8-tetrahydromethanopterin + formaldehyde = 5,10-methylenetetrahydromethanopterin + H2O. The enzyme catalyses D-ribulose 5-phosphate + formaldehyde = D-arabino-hex-3-ulose 6-phosphate. The protein operates within carbohydrate biosynthesis; D-ribose 5-phosphate biosynthesis. In terms of biological role, catalyzes the condensation of formaldehyde with tetrahydromethanopterin (H(4)MPT) to 5,10-methylenetetrahydromethanopterin. Its function is as follows. Catalyzes the reversible formation of ribulose-5-phosphate and formaldehyde from 3-hexulose-6-phosphate. In Methanospirillum hungatei JF-1 (strain ATCC 27890 / DSM 864 / NBRC 100397 / JF-1), this protein is Bifunctional enzyme Fae/Hps.